The primary structure comprises 661 residues: DNA cross-link repair protein PSO2/SNM1 (661 aa).

Positions 1–44 are disordered; that stretch reads MSRKSIVQIRRSEVKRKRSSTASSTSEGKTLHKNTHTSSKRQRT. The segment covering 31–43 has biased composition (basic residues); it reads LHKNTHTSSKRQR. A UBZ4-type zinc finger spans residues 144 to 174; the sequence is VIQCPICLENLSHLELYERETHCDTCIGSDP. Residues cysteine 147, cysteine 150, histidine 165, and cysteine 169 each coordinate Zn(2+).

It belongs to the DNA repair metallo-beta-lactamase (DRMBL) family.

It is found in the nucleus. In terms of biological role, required for DNA interstrand cross-link repair. This requires cleavage of cross-linked DNA to generate DNA double strand breaks (DSBs). This protein has 5' exonuclease activity on single-stranded and double-stranded DNA, which appears to be necessary for the processing of DNA double strand breaks prior to ligation. The sequence is that of DNA cross-link repair protein PSO2/SNM1 (PSO2) from Saccharomyces cerevisiae (strain ATCC 204508 / S288c) (Baker's yeast).